A 131-amino-acid polypeptide reads, in one-letter code: Large ribosomal subunit protein bL12 (131 aa).

Belongs to the bacterial ribosomal protein bL12 family. As to quaternary structure, homodimer. Part of the ribosomal stalk of the 50S ribosomal subunit. Forms a multimeric L10(L12)X complex, where L10 forms an elongated spine to which 2 to 4 L12 dimers bind in a sequential fashion. Binds GTP-bound translation factors.

In terms of biological role, forms part of the ribosomal stalk which helps the ribosome interact with GTP-bound translation factors. Is thus essential for accurate translation. The sequence is that of Large ribosomal subunit protein bL12 from Prochlorococcus marinus (strain NATL2A).